Reading from the N-terminus, the 318-residue chain is Transaldolase (318 aa).

Lys-132 serves as the catalytic Schiff-base intermediate with substrate.

This sequence belongs to the transaldolase family. Type 1 subfamily. In terms of assembly, homodimer.

The protein resides in the cytoplasm. The catalysed reaction is D-sedoheptulose 7-phosphate + D-glyceraldehyde 3-phosphate = D-erythrose 4-phosphate + beta-D-fructose 6-phosphate. It functions in the pathway carbohydrate degradation; pentose phosphate pathway; D-glyceraldehyde 3-phosphate and beta-D-fructose 6-phosphate from D-ribose 5-phosphate and D-xylulose 5-phosphate (non-oxidative stage): step 2/3. Its function is as follows. Transaldolase is important for the balance of metabolites in the pentose-phosphate pathway. This Hamiltonella defensa subsp. Acyrthosiphon pisum (strain 5AT) protein is Transaldolase.